We begin with the raw amino-acid sequence, 88 residues long: UPF0298 protein BcerKBAB4_3759 (88 aa).

This sequence belongs to the UPF0298 family.

The protein localises to the cytoplasm. This Bacillus mycoides (strain KBAB4) (Bacillus weihenstephanensis) protein is UPF0298 protein BcerKBAB4_3759.